We begin with the raw amino-acid sequence, 292 residues long: 33 kDa chaperonin (292 aa).

Intrachain disulfides connect Cys-230–Cys-232 and Cys-263–Cys-266.

Belongs to the HSP33 family. In terms of processing, under oxidizing conditions two disulfide bonds are formed involving the reactive cysteines. Under reducing conditions zinc is bound to the reactive cysteines and the protein is inactive.

It localises to the cytoplasm. Functionally, redox regulated molecular chaperone. Protects both thermally unfolding and oxidatively damaged proteins from irreversible aggregation. Plays an important role in the bacterial defense system toward oxidative stress. This is 33 kDa chaperonin from Salmonella typhi.